The primary structure comprises 239 residues: MTAPLSLFVTGTDTEIGKTFVSAAMLHGFARHGLRAAALKPVAAGAYERDGVWRNEDADQLDAAANVVLPPELRTPFLLKAPAAPHIVAAQEGVTLDIDTIVASHREALTRADVVVVEGVGGFRVPLTDTQDTADLAVALGLPVVLVVGVRLGCISHALLTADAITARGLRIAGWVANHVDPAMSYADENVATIRDWLAREHRAPLLGRIAHLRPAIPESAAAMLDIAALVDTLRRAQH.

ATP is bound at residue 15–20; it reads EIGKTF. Residue Thr19 participates in Mg(2+) binding. Residue Lys40 is part of the active site. ATP contacts are provided by residues Asp57, 118–121, 178–179, and 211–213; these read EGVG, NH, and AHL. Residues Asp57 and Glu118 each coordinate Mg(2+).

This sequence belongs to the dethiobiotin synthetase family. As to quaternary structure, homodimer. Mg(2+) serves as cofactor.

It localises to the cytoplasm. It carries out the reaction (7R,8S)-7,8-diammoniononanoate + CO2 + ATP = (4R,5S)-dethiobiotin + ADP + phosphate + 3 H(+). It participates in cofactor biosynthesis; biotin biosynthesis; biotin from 7,8-diaminononanoate: step 1/2. Functionally, catalyzes a mechanistically unusual reaction, the ATP-dependent insertion of CO2 between the N7 and N8 nitrogen atoms of 7,8-diaminopelargonic acid (DAPA, also called 7,8-diammoniononanoate) to form a ureido ring. This Burkholderia ambifaria (strain MC40-6) protein is ATP-dependent dethiobiotin synthetase BioD.